Reading from the N-terminus, the 129-residue chain is Putative pre-16S rRNA nuclease (129 aa).

Belongs to the YqgF nuclease family.

It is found in the cytoplasm. In terms of biological role, could be a nuclease involved in processing of the 5'-end of pre-16S rRNA. In Campylobacter jejuni subsp. doylei (strain ATCC BAA-1458 / RM4099 / 269.97), this protein is Putative pre-16S rRNA nuclease.